The following is a 428-amino-acid chain: GTPase Obg (428 aa).

One can recognise an Obg domain in the interval 1-158 (MFIDKAKVFI…LSIVLELKLL (158 aa)). One can recognise an OBG-type G domain in the interval 159-331 (ADVGLLGFPN…VIKEAARMLK (173 aa)). Residues 165–172 (GFPNVGKS), 190–194 (FTTLK), 212–215 (DIPG), 282–285 (NKSD), and 312–314 (SAA) each bind GTP. Positions 172 and 192 each coordinate Mg(2+). The 84-residue stretch at 345-428 (MYIPEEKRFT…LNDFEFEYLL (84 aa)) folds into the OCT domain.

This sequence belongs to the TRAFAC class OBG-HflX-like GTPase superfamily. OBG GTPase family. In terms of assembly, monomer. The cofactor is Mg(2+).

It localises to the cytoplasm. In terms of biological role, an essential GTPase which binds GTP, GDP and possibly (p)ppGpp with moderate affinity, with high nucleotide exchange rates and a fairly low GTP hydrolysis rate. Plays a role in control of the cell cycle, stress response, ribosome biogenesis and in those bacteria that undergo differentiation, in morphogenesis control. The chain is GTPase Obg from Clostridium botulinum (strain Eklund 17B / Type B).